The sequence spans 471 residues: Putative multidrug resistance protein MdtD (471 aa).

Residues 1–11 lie on the Periplasmic side of the membrane; it reads MTDLPDSTRWQ. Residues 12–32 form a helical membrane-spanning segment; that stretch reads LWIVAFGFFMQSLDTTIVNTA. Residues 33 to 48 lie on the Cytoplasmic side of the membrane; that stretch reads LPSMAQSLGESPLHMH. A helical transmembrane segment spans residues 49 to 69; it reads MVIVSYVLTVAVMLPASGWLA. The Periplasmic portion of the chain corresponds to 70–76; that stretch reads DKVGVRN. A helical transmembrane segment spans residues 77–97; the sequence is IFFTAIVLFTLGSLFCALSGT. Residues 98 to 101 are Cytoplasmic-facing; that stretch reads LNEL. The helical transmembrane segment at 102–124 threads the bilayer; sequence LLARALQGVGGAMMVPVGRLTVM. The Periplasmic portion of the chain corresponds to 125–137; that stretch reads KIVPREQYMAAMT. The helical transmembrane segment at 138–158 threads the bilayer; that stretch reads FVTLPGQVGPLLGPALGGLLV. The Cytoplasmic portion of the chain corresponds to 159–164; sequence EYASWH. The chain crosses the membrane as a helical span at residues 165-185; that stretch reads WIFLINIPVGIIGAIATLMLM. Over 186–196 the chain is Periplasmic; that stretch reads PNYTMQTRRFD. Residues 197-217 form a helical membrane-spanning segment; it reads LSGFLLLAVGMAVLTLALDGS. Residues 218-224 lie on the Cytoplasmic side of the membrane; sequence KGTGLSP. The chain crosses the membrane as a helical span at residues 225–245; that stretch reads LTIDGLVAVGVVALVLYLLHA. Residues 246-262 lie on the Periplasmic side of the membrane; it reads RNNNRALFSLKLFRTRT. A helical membrane pass occupies residues 263-283; the sequence is FSLGLAGSFAGRIGSGMLPFM. Topologically, residues 284-285 are cytoplasmic; it reads TP. A helical membrane pass occupies residues 286 to 306; the sequence is VFLQIGLGFSPFHAGLMMIPM. The Periplasmic segment spans residues 307-341; it reads VLGSMGMKRIVVQVVNRFGYRRVLVATTLGLSLVT. A helical transmembrane segment spans residues 342–362; sequence LLFMTTALLGWYYVLPFVLFL. Over 363-395 the chain is Cytoplasmic; it reads QGMVNSTRFSSMNTLTLKDLPDNLASSGNSLLS. Residues 396–416 form a helical membrane-spanning segment; the sequence is MIMQLSMSIGVTIAGLLLGLF. At 417–430 the chain is on the periplasmic side; sequence GSQHVSVDSGTTQT. The chain crosses the membrane as a helical span at residues 431–451; sequence VFMYTWLSMAFIIALPAFIFA. Over 452-471 the chain is Cytoplasmic; sequence RVPNDTHQNVAISRRKRSAQ.

It belongs to the major facilitator superfamily. TCR/Tet family.

Its subcellular location is the cell inner membrane. The polypeptide is Putative multidrug resistance protein MdtD (Escherichia coli O8 (strain IAI1)).